The following is a 202-amino-acid chain: Small ribosomal subunit protein uS4 (202 aa).

Positions 1 to 13 (MSRYRGPRLRITR) are enriched in basic residues. The disordered stretch occupies residues 1-43 (MSRYRGPRLRITRRLGDLPGLTRKAAKRSHPPGQHGQARRKRS). An S4 RNA-binding domain is found at 90 to 152 (NRLDNVCFRL…KGSKKLAEAN (63 aa)).

This sequence belongs to the universal ribosomal protein uS4 family. As to quaternary structure, part of the 30S ribosomal subunit. Contacts protein S5. The interaction surface between S4 and S5 is involved in control of translational fidelity.

In terms of biological role, one of the primary rRNA binding proteins, it binds directly to 16S rRNA where it nucleates assembly of the body of the 30S subunit. With S5 and S12 plays an important role in translational accuracy. The sequence is that of Small ribosomal subunit protein uS4 from Prochlorococcus marinus (strain MIT 9303).